Here is a 436-residue protein sequence, read N- to C-terminus: Chorion-specific transcription factor GCMa (436 aa).

Positions 14 to 169 (LSWDINDMKL…KLEAEARRAM (156 aa)) form a DNA-binding region, GCM. Cysteine 76, cysteine 82, cysteine 86, cysteine 113, cysteine 116, cysteine 125, histidine 152, and histidine 154 together coordinate Zn(2+).

Polyubiquitinated in the presence of UBE2D2 and FBXW2 (in vitro).

The protein localises to the nucleus. Transcription factor involved in the control of expression of placental growth factor (PGF) and other placenta-specific genes. Binds to the trophoblast-specific element 2 (TSE2) of the aromatase gene enhancer. Binds to the SYDE1 promoter. Has a central role in mediating the differentiation of trophoblast cells along both the villous and extravillous pathways in placental development. This is Chorion-specific transcription factor GCMa (Gcm1) from Rattus norvegicus (Rat).